Here is a 301-residue protein sequence, read N- to C-terminus: Protein FdhE homolog (301 aa).

It belongs to the FdhE family.

The protein localises to the cytoplasm. Necessary for formate dehydrogenase activity. This is Protein FdhE homolog from Shewanella baltica (strain OS223).